The following is a 210-amino-acid chain: HTH-type transcriptional repressor FabR (210 aa).

The HTH tetR-type domain maps to K10–L70. The segment at residues S33–F52 is a DNA-binding region (H-T-H motif).

In terms of assembly, homodimer.

Its subcellular location is the cytoplasm. In terms of biological role, represses the transcription of fabB, involved in unsaturated fatty acid (UFA) biosynthesis. By controlling UFA production, FabR directly influences the physical properties of the membrane bilayer. The chain is HTH-type transcriptional repressor FabR from Citrobacter koseri (strain ATCC BAA-895 / CDC 4225-83 / SGSC4696).